A 2084-amino-acid polypeptide reads, in one-letter code: RNA-directed RNA polymerase L (2084 aa).

The interval 20 to 221 (EPGLYDQIYD…IELQKSEEEL (202 aa)) is endonuclease. 3 residues coordinate Mn(2+): histidine 80, aspartate 112, and glutamate 126. The For endonuclease activity role is filled by lysine 145. One can recognise a RdRp catalytic domain in the interval 969–1172 (SARSLGPGSI…FGIYSSEKST (204 aa)). Mg(2+) is bound at residue aspartate 1127. Residues 1695-1810 (AQSGTLGGFS…TDGCPVRIME (116 aa)) are cap-binding.

It belongs to the Bunyavirales RNA polymerase family. In terms of assembly, homomultimer. Interacts with the glycoprotein N; this interaction allows efficient polymerase packaging into virus particles. Interacts with nucleoprotein N. Mn(2+) is required as a cofactor. The cofactor is Mg(2+).

The protein localises to the host Golgi apparatus. It localises to the host endoplasmic reticulum. Its subcellular location is the host endoplasmic reticulum-Golgi intermediate compartment. The protein resides in the virion. The catalysed reaction is RNA(n) + a ribonucleoside 5'-triphosphate = RNA(n+1) + diphosphate. Its activity is regulated as follows. Inhibited by Baloxavir acid (BXA). Its function is as follows. RNA-dependent RNA polymerase, which is responsible for the replication and transcription of the viral RNA genome using antigenomic RNA as an intermediate. During transcription, synthesizes subgenomic RNAs and assures their capping by a cap-snatching mechanism, which involves the endonuclease activity cleaving the host capped pre-mRNAs. These short capped RNAs are then used as primers for viral transcription. The 3'-end of subgenomic mRNAs molecules are not polyadenylated. During replication, the polymerase binds the 5' and 3' vRNA extremities at distinct sites. In turn, significant conformational changes occur in the polymerase and in vRNA to initiate active RNA synthesis. As a consequence of the use of the same enzyme for both transcription and replication, these mechanisms need to be well coordinated. The protein is RNA-directed RNA polymerase L of Dabie bandavirus (Severe fever with thrombocytopenia virus).